Consider the following 328-residue polypeptide: tRNA uridine(34) hydroxylase (328 aa).

The 95-residue stretch at 130–224 (LDEDTVVLDT…YGKDPEVQGE (95 aa)) folds into the Rhodanese domain. Catalysis depends on Cys-184, which acts as the Cysteine persulfide intermediate.

This sequence belongs to the TrhO family.

The enzyme catalyses uridine(34) in tRNA + AH2 + O2 = 5-hydroxyuridine(34) in tRNA + A + H2O. Catalyzes oxygen-dependent 5-hydroxyuridine (ho5U) modification at position 34 in tRNAs. This chain is tRNA uridine(34) hydroxylase, found in Streptococcus pyogenes serotype M28 (strain MGAS6180).